Here is a 37-residue protein sequence, read N- to C-terminus: Cytochrome b6-f complex subunit 7 (37 aa).

The helical transmembrane segment at 11–29 (AILSIVLVLVGLAWGFLLL) threads the bilayer.

It belongs to the PetM family. In terms of assembly, the 4 large subunits of the cytochrome b6-f complex are cytochrome b6, subunit IV (17 kDa polypeptide, PetD), cytochrome f and the Rieske protein, while the 4 small subunits are PetG, PetL, PetM and PetN. The complex functions as a dimer.

Its subcellular location is the cellular thylakoid membrane. In terms of biological role, component of the cytochrome b6-f complex, which mediates electron transfer between photosystem II (PSII) and photosystem I (PSI), cyclic electron flow around PSI, and state transitions. The sequence is that of Cytochrome b6-f complex subunit 7 from Gloeothece citriformis (strain PCC 7424) (Cyanothece sp. (strain PCC 7424)).